A 530-amino-acid polypeptide reads, in one-letter code: Na(+)/H(+) antiporter NhaB (530 aa).

Transmembrane regions (helical) follow at residues 13 to 33, 98 to 118, 123 to 145, 149 to 166, 205 to 225, 238 to 258, 308 to 328, 330 to 350, 356 to 376, 393 to 413, 451 to 471, and 480 to 500; these read FLGKAPDWYKLAIISFLIINP, LLLVFMVAGIYFMKELLLFIF, LGIQSKILLSVAFCVAAAFLSAF, LTVIAVVISVAVGFYSIY, LLMHAGVGTALGGVMTMVGEP, FGEFIIRMLPVTLPVFFCGIL, IAVWLIVGLALHVAEVGLIGL, VIILATAFTGVIEEHSMGKAF, FTALLAVFFAVVAVIIDQALF, LALFYVANGILSMVSDNVFVG, ATPNGQAAFLFLLTSALAPLI, and IMALPYTIVLALVGLAGIVFF.

The protein belongs to the NhaB Na(+)/H(+) (TC 2.A.34) antiporter family.

It is found in the cell inner membrane. The enzyme catalyses 2 Na(+)(in) + 3 H(+)(out) = 2 Na(+)(out) + 3 H(+)(in). In terms of biological role, na(+)/H(+) antiporter that extrudes sodium in exchange for external protons. This Vibrio atlanticus (strain LGP32) (Vibrio splendidus (strain Mel32)) protein is Na(+)/H(+) antiporter NhaB.